We begin with the raw amino-acid sequence, 136 residues long: Ig heavy chain V region XIG8 (136 aa).

A signal peptide spans 1-18 (GFGIFVIFMFFSPSCILS). The 110-residue stretch at 19–128 (QTLQESGPGT…TAGYFEHWGQ (110 aa)) folds into the Ig-like domain.

The protein is Ig heavy chain V region XIG8 of Xenopus laevis (African clawed frog).